Consider the following 138-residue polypeptide: Cofilin (138 aa).

One can recognise an ADF-H domain in the interval 2–136 (SSGVQPTQEC…TKDALFEKAT (135 aa)).

The protein belongs to the actin-binding proteins ADF family.

Its subcellular location is the cytoplasm. It localises to the cytoskeleton. The protein resides in the nucleus matrix. Its function is as follows. Controls reversibly actin polymerization and depolymerization in a pH-sensitive manner. It has the ability to bind G- and F-actin in a 1:1 ratio of cofilin to actin. Binding to F-actin is regulated by tropomyosin. It is the major component of intranuclear and cytoplasmic actin rods. Required for accumulation of actin at the cell division site via depolymerizing actin at the cell ends. In association with myosin II has a role in the assembly of the contractile ring via severing actin filaments. Involved in the maintenance of the contractile ring once formed. In association with profilin and capping protein, has a role in the mitotic reorganization of the actin cytoskeleton. The chain is Cofilin (COF1) from Cryptococcus neoformans var. neoformans serotype D (strain B-3501A) (Filobasidiella neoformans).